The sequence spans 2345 residues: Acetyl-CoA carboxylase 1 (2345 aa).

Met-1 bears the N-acetylmethionine mark. 8 positions are modified to phosphoserine: Ser-5, Ser-23, Ser-25, Ser-29, Ser-34, Ser-47, Ser-49, and Ser-52. Thr-57 is subject to Phosphothreonine. 2 positions are modified to phosphoserine: Ser-77 and Ser-79. Residue Ser-79 is modified to Phosphoserine; by AMPK. Residues Val-116–Ala-617 form the Biotin carboxylation domain. The 192-residue stretch at Ser-274–Met-465 folds into the ATP-grasp domain. Ala-300 to Leu-357 contributes to the ATP binding site. 3 residues coordinate Mg(2+): Glu-423, Glu-436, and Asn-438. Glu-423, Glu-436, and Asn-438 together coordinate Mn(2+). Arg-440 is an active-site residue. Thr-609 bears the Phosphothreonine mark. Residues Phe-744 to Gln-818 enclose the Biotinyl-binding domain. N6-biotinyllysine is present on Lys-785. Residues Ser-834, Ser-1200, Ser-1215, and Ser-1217 each carry the phosphoserine modification. The residue at position 1226 (Thr-1226) is a Phosphothreonine. 3 positions are modified to phosphoserine: Ser-1258, Ser-1262, and Ser-1272. Lys-1333 carries the N6-acetyllysine modification. One can recognise a CoA carboxyltransferase N-terminal domain in the interval Pro-1575–Asn-1913. The tract at residues Pro-1575–Asn-2233 is carboxyltransferase. CoA-binding residues include Arg-1822, Lys-2126, and Arg-2128. Residues Pro-1917–Asn-2233 form the CoA carboxyltransferase C-terminal domain. Thr-2152 carries the phosphothreonine modification.

Monomer, homodimer, and homotetramer. Can form filamentous polymers. Interacts in its inactive phosphorylated form with the BRCT domains of BRCA1 which prevents ACACA dephosphorylation and inhibits lipid synthesis. Interacts with MID1IP1; interaction with MID1IP1 promotes oligomerization and increases its activity. Requires Mg(2+) as cofactor. It depends on Mn(2+) as a cofactor. Biotin is required as a cofactor. In terms of processing, phosphorylation on Ser-1262 is required for interaction with BRCA1. Post-translationally, phosphorylation at Ser-79 by AMPK inactivates enzyme activity. The biotin cofactor is covalently attached to the central biotinyl-binding domain and is required for the catalytic activity.

It localises to the cytoplasm. The protein localises to the cytosol. The catalysed reaction is hydrogencarbonate + acetyl-CoA + ATP = malonyl-CoA + ADP + phosphate + H(+). It functions in the pathway lipid metabolism; malonyl-CoA biosynthesis; malonyl-CoA from acetyl-CoA: step 1/1. Inhibited by phosphorylation. Citrate promotes oligomerization of the protein into filaments that correspond to the most active form of the carboxylase. Functionally, cytosolic enzyme that catalyzes the carboxylation of acetyl-CoA to malonyl-CoA, the first and rate-limiting step of de novo fatty acid biosynthesis. This is a 2 steps reaction starting with the ATP-dependent carboxylation of the biotin carried by the biotin carboxyl carrier (BCC) domain followed by the transfer of the carboxyl group from carboxylated biotin to acetyl-CoA. This chain is Acetyl-CoA carboxylase 1, found in Mus musculus (Mouse).